A 166-amino-acid chain; its full sequence is Protein BioX (166 aa).

5 helical membrane-spanning segments follow: residues 12–32 (ISLL…TGIP), 33–53 (GSEF…FGFK), 55–75 (YFLA…HSIL), 87–107 (VGLI…AGPI), and 117–137 (AFTL…GMVI).

The protein resides in the cell membrane. In terms of biological role, does not seem to be a permease of pimelate. Its role in biotin synthesis is not clear. The chain is Protein BioX (bioX) from Lysinibacillus sphaericus (Bacillus sphaericus).